Here is a 377-residue protein sequence, read N- to C-terminus: Phosphoserine aminotransferase (377 aa).

Arg-43 is a binding site for L-glutamate. Trp-105, Thr-164, Asp-189, and Gln-212 together coordinate pyridoxal 5'-phosphate. At Lys-213 the chain carries N6-(pyridoxal phosphate)lysine. 254–255 is a binding site for pyridoxal 5'-phosphate; it reads NT.

Belongs to the class-V pyridoxal-phosphate-dependent aminotransferase family. SerC subfamily. Homodimer. It depends on pyridoxal 5'-phosphate as a cofactor.

The protein localises to the cytoplasm. The catalysed reaction is O-phospho-L-serine + 2-oxoglutarate = 3-phosphooxypyruvate + L-glutamate. It catalyses the reaction 4-(phosphooxy)-L-threonine + 2-oxoglutarate = (R)-3-hydroxy-2-oxo-4-phosphooxybutanoate + L-glutamate. The protein operates within amino-acid biosynthesis; L-serine biosynthesis; L-serine from 3-phospho-D-glycerate: step 2/3. It functions in the pathway cofactor biosynthesis; pyridoxine 5'-phosphate biosynthesis; pyridoxine 5'-phosphate from D-erythrose 4-phosphate: step 3/5. Functionally, catalyzes the reversible conversion of 3-phosphohydroxypyruvate to phosphoserine and of 3-hydroxy-2-oxo-4-phosphonooxybutanoate to phosphohydroxythreonine. In Bordetella pertussis (strain Tohama I / ATCC BAA-589 / NCTC 13251), this protein is Phosphoserine aminotransferase.